The sequence spans 474 residues: Transmembrane transporter FVEG_12640 (474 aa).

A compositionally biased stretch (polar residues) spans Met1–Ser15. A disordered region spans residues Met1–Arg39. 10 helical membrane passes run Ile72 to Val92, Leu133 to Ser153, Gly164 to Ile184, Trp192 to Val212, Trp231 to Ile251, Ala275 to Tyr295, Val317 to Ala337, Leu364 to Leu384, Leu387 to Leu407, and Leu431 to Ile451.

This sequence belongs to the amino acid/polyamine transporter 2 family.

It localises to the membrane. Functionally, transmembrane transporter; part of the Fusarium detoxification of benzoxazolinone cluster 2 (FDB2) involved in the degradation of benzoxazolinones produced by the host plant. Maize, wheat, and rye produce the 2 benzoxazinone phytoanticipins 2,4-dihy-droxy-7-methoxy-1,4-benzoxazin-3-one (DIMBOA) and 2,4-dihydroxy-1,4-benzoxazin-3-one (DIBOA) that, due to their inherent instability once released, spontaneously degrade to the more stable corresponding benzoxazolinones, 6-methoxy-2-benzoxazolinone (MBOA) and 2-benzoxazolinone (BOA), respectively. Might be involved in the transport of metabolites of benzoxazolinone degradation. In Gibberella moniliformis (strain M3125 / FGSC 7600) (Maize ear and stalk rot fungus), this protein is Transmembrane transporter FVEG_12640.